A 543-amino-acid chain; its full sequence is Carboxypeptidase Y homolog A (543 aa).

Residues 1-17 form the signal peptide; sequence MRVLPATLLVGAATAAA. Residues 18-124 constitute a propeptide that is removed on maturation; the sequence is PPFQQILGLP…KLEAYDLRVK (107 aa). Cystine bridges form between Cys-179–Cys-419, Cys-313–Cys-327, Cys-337–Cys-360, Cys-344–Cys-353, and Cys-382–Cys-389. N-linked (GlcNAc...) asparagine glycosylation is present at Asn-210. Ser-266 is an active-site residue. Asp-458 is a catalytic residue. Residue Asn-509 is glycosylated (N-linked (GlcNAc...) asparagine). His-520 is an active-site residue.

The protein belongs to the peptidase S10 family.

It localises to the vacuole. The catalysed reaction is Release of a C-terminal amino acid with broad specificity.. Its function is as follows. Vacuolar carboxypeptidase involved in degradation of small peptides. Digests preferentially peptides containing an aliphatic or hydrophobic residue in P1' position, as well as methionine, leucine or phenylalanine in P1 position of ester substrate. This chain is Carboxypeptidase Y homolog A (cpyA), found in Aspergillus fumigatus (strain ATCC MYA-4609 / CBS 101355 / FGSC A1100 / Af293) (Neosartorya fumigata).